We begin with the raw amino-acid sequence, 104 residues long: MYAIIEASGKQYKVEEGITLFTEKLKDFAEGDQVVFDRVLLLKDDSGVKVGKPYLENVKIVGKVVRHGRGKKIRVVKFRPRKNYHRVKGHKQWFSEVLIEKIEY.

This sequence belongs to the bacterial ribosomal protein bL21 family. As to quaternary structure, part of the 50S ribosomal subunit. Contacts protein L20.

This protein binds to 23S rRNA in the presence of protein L20. The protein is Large ribosomal subunit protein bL21 of Kosmotoga olearia (strain ATCC BAA-1733 / DSM 21960 / TBF 19.5.1).